Reading from the N-terminus, the 272-residue chain is 4-diphosphocytidyl-2-C-methyl-D-erythritol kinase (272 aa).

The active site involves lysine 14. 92-102 (PMGGGLGGGSS) provides a ligand contact to ATP. Aspartate 132 is an active-site residue.

This sequence belongs to the GHMP kinase family. IspE subfamily.

The catalysed reaction is 4-CDP-2-C-methyl-D-erythritol + ATP = 4-CDP-2-C-methyl-D-erythritol 2-phosphate + ADP + H(+). The protein operates within isoprenoid biosynthesis; isopentenyl diphosphate biosynthesis via DXP pathway; isopentenyl diphosphate from 1-deoxy-D-xylulose 5-phosphate: step 3/6. In terms of biological role, catalyzes the phosphorylation of the position 2 hydroxy group of 4-diphosphocytidyl-2C-methyl-D-erythritol. The polypeptide is 4-diphosphocytidyl-2-C-methyl-D-erythritol kinase (Fervidobacterium nodosum (strain ATCC 35602 / DSM 5306 / Rt17-B1)).